Here is a 158-residue protein sequence, read N- to C-terminus: MNIIESDTIANKAKIAIAVVRFNRFVNNNLLEGALDVLKRIGHVKDENITIIWVPGSYELPLIAKALAISHKYDGIIALGTVIRGFTIHFEFVAKECSSGLSRISMENTLPIGFGLLTTDNISQAIERSGIKANNKGSEAALAVLEMINILKIIKNSS.

5-amino-6-(D-ribitylamino)uracil-binding positions include phenylalanine 22, 57–59 (SYE), and 81–83 (TVI). Histidine 89 functions as the Proton donor in the catalytic mechanism. Residue phenylalanine 114 participates in 5-amino-6-(D-ribitylamino)uracil binding. Arginine 128 serves as a coordination point for (2S)-2-hydroxy-3-oxobutyl phosphate.

It belongs to the DMRL synthase family. As to quaternary structure, forms an icosahedral capsid composed of 60 subunits, arranged as a dodecamer of pentamers.

It carries out the reaction (2S)-2-hydroxy-3-oxobutyl phosphate + 5-amino-6-(D-ribitylamino)uracil = 6,7-dimethyl-8-(1-D-ribityl)lumazine + phosphate + 2 H2O + H(+). The protein operates within cofactor biosynthesis; riboflavin biosynthesis; riboflavin from 2-hydroxy-3-oxobutyl phosphate and 5-amino-6-(D-ribitylamino)uracil: step 1/2. Functionally, catalyzes the formation of 6,7-dimethyl-8-ribityllumazine by condensation of 5-amino-6-(D-ribitylamino)uracil with 3,4-dihydroxy-2-butanone 4-phosphate. This is the penultimate step in the biosynthesis of riboflavin. The chain is 6,7-dimethyl-8-ribityllumazine synthase from Blochmanniella pennsylvanica (strain BPEN).